The following is a 476-amino-acid chain: Aspartyl/glutamyl-tRNA(Asn/Gln) amidotransferase subunit B (476 aa).

Belongs to the GatB/GatE family. GatB subfamily. Heterotrimer of A, B and C subunits.

It carries out the reaction L-glutamyl-tRNA(Gln) + L-glutamine + ATP + H2O = L-glutaminyl-tRNA(Gln) + L-glutamate + ADP + phosphate + H(+). It catalyses the reaction L-aspartyl-tRNA(Asn) + L-glutamine + ATP + H2O = L-asparaginyl-tRNA(Asn) + L-glutamate + ADP + phosphate + 2 H(+). Its function is as follows. Allows the formation of correctly charged Asn-tRNA(Asn) or Gln-tRNA(Gln) through the transamidation of misacylated Asp-tRNA(Asn) or Glu-tRNA(Gln) in organisms which lack either or both of asparaginyl-tRNA or glutaminyl-tRNA synthetases. The reaction takes place in the presence of glutamine and ATP through an activated phospho-Asp-tRNA(Asn) or phospho-Glu-tRNA(Gln). The protein is Aspartyl/glutamyl-tRNA(Asn/Gln) amidotransferase subunit B of Albidiferax ferrireducens (strain ATCC BAA-621 / DSM 15236 / T118) (Rhodoferax ferrireducens).